We begin with the raw amino-acid sequence, 362 residues long: UDP-N-acetylglucosamine--N-acetylmuramyl-(pentapeptide) pyrophosphoryl-undecaprenol N-acetylglucosamine transferase (362 aa).

Residues 15–17 (TGG), Asn-127, Arg-165, Ser-191, Ile-247, 266–271 (ALTVSE), and Gln-292 contribute to the UDP-N-acetyl-alpha-D-glucosamine site.

Belongs to the glycosyltransferase 28 family. MurG subfamily.

The protein resides in the cell inner membrane. It catalyses the reaction di-trans,octa-cis-undecaprenyl diphospho-N-acetyl-alpha-D-muramoyl-L-alanyl-D-glutamyl-meso-2,6-diaminopimeloyl-D-alanyl-D-alanine + UDP-N-acetyl-alpha-D-glucosamine = di-trans,octa-cis-undecaprenyl diphospho-[N-acetyl-alpha-D-glucosaminyl-(1-&gt;4)]-N-acetyl-alpha-D-muramoyl-L-alanyl-D-glutamyl-meso-2,6-diaminopimeloyl-D-alanyl-D-alanine + UDP + H(+). The protein operates within cell wall biogenesis; peptidoglycan biosynthesis. Its function is as follows. Cell wall formation. Catalyzes the transfer of a GlcNAc subunit on undecaprenyl-pyrophosphoryl-MurNAc-pentapeptide (lipid intermediate I) to form undecaprenyl-pyrophosphoryl-MurNAc-(pentapeptide)GlcNAc (lipid intermediate II). This Shewanella baltica (strain OS223) protein is UDP-N-acetylglucosamine--N-acetylmuramyl-(pentapeptide) pyrophosphoryl-undecaprenol N-acetylglucosamine transferase.